Reading from the N-terminus, the 751-residue chain is Proton-associated sugar transporter A (751 aa).

The next 6 helical transmembrane spans lie at 93–113, 123–143, 155–175, 191–211, 233–253, and 268–288; these read ILFGIEFSYAMETAYVTPVLL, SLVWFISPILGFLLQPLLGAW, RPFILVLAIGALLGLSLLLNG, WGILLTVCGVVLMDFSADSAD, IHALMAGLGGGFGYVVGGIHW, and VIYIFTAITLSVTTVFTLVSI. Position 500 is a phosphothreonine (Thr500). 6 helical membrane-spanning segments follow: residues 536–556, 576–596, 606–626, 630–650, 688–708, and 710–730; these read GWLSFEGMLLFYTDFMGEVVF, VTMGCWGMCIYAFSAAFYSAI, VRTLYFIAYLLFGLGTGLATL, LYVVLSLCTHYGILFSTLCTL, FLAQILVSLVLGPLTSAVGSA, and GVMYFASLVSFLGCLYSSLCV.

This sequence belongs to the glycoside-pentoside-hexuronide (GPH) cation symporter transporter (TC 2.A.2) family. Predominantly expressed in brain.

Its subcellular location is the membrane. It carries out the reaction D-galactose(in) + H(+)(in) = D-galactose(out) + H(+)(out). It catalyses the reaction D-glucose(out) + H(+)(out) = D-glucose(in) + H(+)(in). Functionally, proton-associated glucose transporter in the brain. The polypeptide is Proton-associated sugar transporter A (Rattus norvegicus (Rat)).